Here is a 910-residue protein sequence, read N- to C-terminus: Putative disease resistance protein At1g58400 (910 aa).

A coiled-coil region spans residues 15 to 57; sequence DRLTQEYEQFQGVEDRIAELKSNLNLLKSFLKDAEAKKNTSQM. The NB-ARC domain occupies 148 to 460; sequence REREMRQTFS…AEGILEPRHY (313 aa). 191-198 is a binding site for ATP; sequence GMGGLGKT. 2 LRR repeats span residues 580 to 604 and 605 to 628; these read LELL…GIGK and LIHL…LGNL.

It belongs to the disease resistance NB-LRR family.

Functionally, potential disease resistance protein. The sequence is that of Putative disease resistance protein At1g58400 from Arabidopsis thaliana (Mouse-ear cress).